Here is a 253-residue protein sequence, read N- to C-terminus: Dihydroanticapsin 7-dehydrogenase (253 aa).

An NAD(+)-binding site is contributed by 9–31 (LITGGASGIGYAAVQAFLNQQAN). Position 139 (S139) interacts with substrate. The active-site Proton acceptor is Y152.

Belongs to the short-chain dehydrogenases/reductases (SDR) family.

The enzyme catalyses L-dihydroanticapsin + NAD(+) = L-anticapsin + NADH + H(+). Its pathway is antibiotic biosynthesis; bacilysin biosynthesis. Functionally, part of the bacABCDEFG operon responsible for the biosynthesis of bacilysin, an irreversible inactivator of the glutaminase domain of glucosamine synthetase. Catalyzes the dehydrogenation of the C7-hydroxyl group in the 4S-tetrahydrotyrosine (4S-H4Tyr) to yield anticapsin (epoxycyclohexanonyl-Ala). The protein is Dihydroanticapsin 7-dehydrogenase of Bacillus subtilis.